A 275-amino-acid chain; its full sequence is NH(3)-dependent NAD(+) synthetase (275 aa).

50 to 57 (GISGGVDS) lines the ATP pocket. Asp56 provides a ligand contact to Mg(2+). Arg147 serves as a coordination point for deamido-NAD(+). An ATP-binding site is contributed by Thr167. A Mg(2+)-binding site is contributed by Glu172. The deamido-NAD(+) site is built by Lys180 and Asp187. Residues Lys196 and Thr218 each coordinate ATP. Position 267–268 (267–268 (HK)) interacts with deamido-NAD(+).

Belongs to the NAD synthetase family. In terms of assembly, homodimer.

The catalysed reaction is deamido-NAD(+) + NH4(+) + ATP = AMP + diphosphate + NAD(+) + H(+). It participates in cofactor biosynthesis; NAD(+) biosynthesis; NAD(+) from deamido-NAD(+) (ammonia route): step 1/1. Its function is as follows. Catalyzes the ATP-dependent amidation of deamido-NAD to form NAD. Uses ammonia as a nitrogen source. This is NH(3)-dependent NAD(+) synthetase from Pseudomonas fluorescens (strain Pf0-1).